A 302-amino-acid polypeptide reads, in one-letter code: F-box protein At1g20360 (302 aa).

Positions 1 to 48 (MNSLPLHLLDQILFRLEPKSLAMMKSTNRTINSHISDPLFESEYFSRL) constitute an F-box domain.

The polypeptide is F-box protein At1g20360 (Arabidopsis thaliana (Mouse-ear cress)).